Here is a 501-residue protein sequence, read N- to C-terminus: Amidophosphoribosyltransferase (501 aa).

Catalysis depends on Cys2, which acts as the Nucleophile. The Glutamine amidotransferase type-2 domain occupies 2–234 (CGIVGIVGKS…PGEAVYITEE (233 aa)). 3 residues coordinate Mg(2+): Thr303, Asp365, and Asp366.

It in the C-terminal section; belongs to the purine/pyrimidine phosphoribosyltransferase family. Mg(2+) serves as cofactor.

The catalysed reaction is 5-phospho-beta-D-ribosylamine + L-glutamate + diphosphate = 5-phospho-alpha-D-ribose 1-diphosphate + L-glutamine + H2O. The protein operates within purine metabolism; IMP biosynthesis via de novo pathway; N(1)-(5-phospho-D-ribosyl)glycinamide from 5-phospho-alpha-D-ribose 1-diphosphate: step 1/2. Functionally, catalyzes the formation of phosphoribosylamine from phosphoribosylpyrophosphate (PRPP) and glutamine. The protein is Amidophosphoribosyltransferase of Pseudomonas aeruginosa (strain ATCC 15692 / DSM 22644 / CIP 104116 / JCM 14847 / LMG 12228 / 1C / PRS 101 / PAO1).